The chain runs to 304 residues: Aspartate carbamoyltransferase catalytic subunit (304 aa).

Residues R54 and T55 each contribute to the carbamoyl phosphate site. Residue K83 participates in L-aspartate binding. Residues R104, H132, and Q135 each contribute to the carbamoyl phosphate site. Positions 165 and 226 each coordinate L-aspartate. The carbamoyl phosphate site is built by L265 and P266.

The protein belongs to the aspartate/ornithine carbamoyltransferase superfamily. ATCase family. In terms of assembly, heterooligomer of catalytic and regulatory chains.

It carries out the reaction carbamoyl phosphate + L-aspartate = N-carbamoyl-L-aspartate + phosphate + H(+). It functions in the pathway pyrimidine metabolism; UMP biosynthesis via de novo pathway; (S)-dihydroorotate from bicarbonate: step 2/3. Catalyzes the condensation of carbamoyl phosphate and aspartate to form carbamoyl aspartate and inorganic phosphate, the committed step in the de novo pyrimidine nucleotide biosynthesis pathway. In Pyrobaculum neutrophilum (strain DSM 2338 / JCM 9278 / NBRC 100436 / V24Sta) (Thermoproteus neutrophilus), this protein is Aspartate carbamoyltransferase catalytic subunit.